The sequence spans 511 residues: Maturase K (511 aa).

The protein belongs to the intron maturase 2 family. MatK subfamily.

The protein localises to the plastid. Its subcellular location is the chloroplast. In terms of biological role, usually encoded in the trnK tRNA gene intron. Probably assists in splicing its own and other chloroplast group II introns. This Nandina domestica (Heavenly bamboo) protein is Maturase K.